We begin with the raw amino-acid sequence, 277 residues long: Large ribosomal subunit protein uL2 (277 aa).

The interval 218–277 (PTVRGSVMNPNDHPHGGGEGKSPIGHPSPLTPWGKPALGYKTRKNKKYSDGMIIKRRGQK) is disordered.

This sequence belongs to the universal ribosomal protein uL2 family. In terms of assembly, part of the 50S ribosomal subunit. Forms a bridge to the 30S subunit in the 70S ribosome.

Functionally, one of the primary rRNA binding proteins. Required for association of the 30S and 50S subunits to form the 70S ribosome, for tRNA binding and peptide bond formation. It has been suggested to have peptidyltransferase activity; this is somewhat controversial. Makes several contacts with the 16S rRNA in the 70S ribosome. In Clostridium novyi (strain NT), this protein is Large ribosomal subunit protein uL2.